The following is a 496-amino-acid chain: Cytochrome P450 71B12 (496 aa).

Residues 2–22 (SLWYIIVAFVFFSSMIIVRII) traverse the membrane as a helical segment. Cysteine 436 lines the heme pocket.

This sequence belongs to the cytochrome P450 family. Heme serves as cofactor.

It is found in the membrane. The protein is Cytochrome P450 71B12 (CYP71B12) of Arabidopsis thaliana (Mouse-ear cress).